The following is a 269-amino-acid chain: Zinc transporter ZupT (269 aa).

8 helical membrane-spanning segments follow: residues 12 to 32 (AFSI…LVMF), 41 to 61 (LSFG…TEIF), 75 to 95 (DHAF…IALI), 126 to 146 (MMAA…TFFA), 152 to 172 (AVGM…GISI), 187 to 207 (VWAC…GYLV), 211 to 231 (FLSP…MVFL), and 249 to 269 (TVYG…LFHF). Fe(2+)-binding residues include Asn-136 and Glu-139. Zn(2+)-binding residues include Glu-139 and His-164. The Fe(2+) site is built by Asn-165, Glu-168, and Glu-197. Residue Glu-168 participates in Zn(2+) binding.

The protein belongs to the ZIP transporter (TC 2.A.5) family. ZupT subfamily.

It localises to the cell inner membrane. The catalysed reaction is Zn(2+)(in) = Zn(2+)(out). In terms of biological role, mediates zinc uptake. May also transport other divalent cations. This chain is Zinc transporter ZupT, found in Neisseria meningitidis serogroup B (strain ATCC BAA-335 / MC58).